The following is a 161-amino-acid chain: Phosphopantetheine adenylyltransferase (161 aa).

Ser-8 contributes to the substrate binding site. ATP-binding positions include 8–9 and His-16; that span reads SF. Substrate-binding residues include Lys-40, Thr-72, and Arg-86. ATP contacts are provided by residues 87-89, Glu-97, and 122-128; these read GLR and HSFLSSS.

The protein belongs to the bacterial CoaD family. As to quaternary structure, homohexamer. The cofactor is Mg(2+).

The protein localises to the cytoplasm. It catalyses the reaction (R)-4'-phosphopantetheine + ATP + H(+) = 3'-dephospho-CoA + diphosphate. Its pathway is cofactor biosynthesis; coenzyme A biosynthesis; CoA from (R)-pantothenate: step 4/5. Its function is as follows. Reversibly transfers an adenylyl group from ATP to 4'-phosphopantetheine, yielding dephospho-CoA (dPCoA) and pyrophosphate. The chain is Phosphopantetheine adenylyltransferase from Gloeobacter violaceus (strain ATCC 29082 / PCC 7421).